A 1598-amino-acid chain; its full sequence is Transposon Ty2-LR2 Gag-Pol polyprotein (1598 aa).

Composition is skewed to polar residues over residues 1 to 11 (MESQQLHQNPH), 19 to 39 (ASVT…SASN), and 49 to 60 (KVNSQEETTPGT). Disordered stretches follow at residues 1–88 (MESQ…YQQH) and 359–449 (QHSE…SNDE). The interval 295–397 (ENNINVSDRL…SSKPRAAKAH (103 aa)) is RNA-binding. Low complexity predominate over residues 369–381 (TSPNTTNTKVTTR). Polar residues-rich tracts occupy residues 399–408 (IATSSKFSRV) and 415–435 (ESTV…GQQQ). Residue Asp457 is the For protease activity; shared with dimeric partner of the active site. An integrase-type zinc finger-like region spans residues 579 to 636 (NVNKSKSVNKYPYPLIHRMLGHANFRSIQKSLKKNAVTYLKESDIEWSNASTYQCPDC). Residues 656-831 (ESYEPFQYLH…AGLDITTILP (176 aa)) enclose the Integrase catalytic domain. Positions 667 and 732 each coordinate Mg(2+). Polar residues-rich tracts occupy residues 915–927 (SFIE…QSYD), 1009–1034 (ESDT…STNE), and 1065–1082 (QRNS…STPS). 5 disordered regions span residues 915–934 (SFIE…ESDH), 1004–1034 (MGGT…STNE), 1059–1135 (TEEP…KSSK), 1146–1165 (LPLP…VSKD), and 1170–1205 (HSRQ…TEIE). Over residues 1151–1165 (LTHKSPTDTSDVSKD) the composition is skewed to basic and acidic residues. The Bipartite nuclear localization signal motif lies at 1193-1227 (KKRSLEDNETEIEVSRDTWNNKNMRSLEPPRSKKR). The 139-residue stretch at 1353–1491 (NDYYITQLDI…DILGLEIKYQ (139 aa)) folds into the Reverse transcriptase Ty1/copia-type domain. Residues Asp1361, Asp1442, and Asp1443 each contribute to the Mg(2+) site.

As to quaternary structure, the capsid protein forms a homotrimer, from which the VLPs are assembled. The protease is a homodimer, whose active site consists of two apposed aspartic acid residues. Initially, virus-like particles (VLPs) are composed of the structural unprocessed proteins Gag and Gag-Pol, and also contain the host initiator methionine tRNA (tRNA(i)-Met) which serves as a primer for minus-strand DNA synthesis, and a dimer of genomic Ty RNA. Processing of the polyproteins occurs within the particle and proceeds by an ordered pathway, called maturation. First, the protease (PR) is released by autocatalytic cleavage of the Gag-Pol polyprotein, and this cleavage is a prerequisite for subsequent processing at the remaining sites to release the mature structural and catalytic proteins. Maturation takes place prior to the RT reaction and is required to produce transposition-competent VLPs.

The protein resides in the cytoplasm. It localises to the nucleus. It carries out the reaction DNA(n) + a 2'-deoxyribonucleoside 5'-triphosphate = DNA(n+1) + diphosphate. It catalyses the reaction Endonucleolytic cleavage to 5'-phosphomonoester.. In terms of biological role, capsid protein (CA) is the structural component of the virus-like particle (VLP), forming the shell that encapsulates the retrotransposons dimeric RNA genome. The particles are assembled from trimer-clustered units and there are holes in the capsid shells that allow for the diffusion of macromolecules. CA also has nucleocapsid-like chaperone activity, promoting primer tRNA(i)-Met annealing to the multipartite primer-binding site (PBS), dimerization of Ty2 RNA and initiation of reverse transcription. The aspartyl protease (PR) mediates the proteolytic cleavages of the Gag and Gag-Pol polyproteins after assembly of the VLP. Its function is as follows. Reverse transcriptase/ribonuclease H (RT) is a multifunctional enzyme that catalyzes the conversion of the retro-elements RNA genome into dsDNA within the VLP. The enzyme displays a DNA polymerase activity that can copy either DNA or RNA templates, and a ribonuclease H (RNase H) activity that cleaves the RNA strand of RNA-DNA heteroduplexes during plus-strand synthesis and hydrolyzes RNA primers. The conversion leads to a linear dsDNA copy of the retrotransposon that includes long terminal repeats (LTRs) at both ends. Functionally, integrase (IN) targets the VLP to the nucleus, where a subparticle preintegration complex (PIC) containing at least integrase and the newly synthesized dsDNA copy of the retrotransposon must transit the nuclear membrane. Once in the nucleus, integrase performs the integration of the dsDNA into the host genome. The polypeptide is Transposon Ty2-LR2 Gag-Pol polyprotein (TY2B-LR2) (Saccharomyces cerevisiae (strain ATCC 204508 / S288c) (Baker's yeast)).